The chain runs to 103 residues: Large ribosomal subunit protein bL21 (103 aa).

The protein belongs to the bacterial ribosomal protein bL21 family. In terms of assembly, part of the 50S ribosomal subunit. Contacts protein L20.

Functionally, this protein binds to 23S rRNA in the presence of protein L20. This is Large ribosomal subunit protein bL21 from Wolinella succinogenes (strain ATCC 29543 / DSM 1740 / CCUG 13145 / JCM 31913 / LMG 7466 / NCTC 11488 / FDC 602W) (Vibrio succinogenes).